We begin with the raw amino-acid sequence, 314 residues long: MMLLGASLYLNNTQEVSDEIDTANLYANWKMKYNRRYTNQRDEMYRYKVFTDNLNYIRAFYESPEEATFTLELNQFADMSQQEFAQTYLSLKVPRTAKLNAANSNFQYKGAEVDWTDNKKVKYPAVKNQGSCGSCWAFSAVGALEINTDIELNRKYELSEQDLVDCSGPYDNDGCNGGWMDSAFEYVADNGLAEAKDYPYTAKDGTCKTSVKRPYTHVQGFKDIDSCDELAQTIQERTVAVAVDANPWQFYRSGVLSKCTKNLNHGVVLVGVQADGAWKIRNSWGSSWGEAGHIRLAGGDTCGICAAPSFPILG.

Residues 1 to 24 (MMLLGASLYLNNTQEVSDEIDTAN) form the signal peptide. The propeptide at 25–109 (LYANWKMKYN…NAANSNFQYK (85 aa)) is activation peptide. 3 disulfide bridges follow: Cys132/Cys175, Cys166/Cys207, and Cys259/Cys302. Residue Cys135 is part of the active site. Active-site residues include His265 and Asn282.

It belongs to the peptidase C1 family.

It localises to the secreted. It carries out the reaction Specificity close to that of papain. As compared to cathepsin B, cathepsin L exhibits higher activity toward protein substrates, but has little activity on Z-Arg-Arg-NHMec, and no peptidyl-dipeptidase activity.. Functionally, may be involved in extracellular digestion. In Paramecium tetraurelia, this protein is Cathepsin L 1.